A 330-amino-acid chain; its full sequence is Putative pentatricopeptide repeat-containing protein At5g36300 (330 aa).

PPR repeat units follow at residues Ser-10–Pro-44, Asp-45–Phe-75, Val-83–Leu-113, Asn-114–Met-148, Asp-149–Ser-179, Asn-185–Asp-215, Ser-231–Pro-265, Asn-266–Thr-296, and Asp-302–Leu-330.

It belongs to the PPR family. P subfamily.

In Arabidopsis thaliana (Mouse-ear cress), this protein is Putative pentatricopeptide repeat-containing protein At5g36300.